A 370-amino-acid polypeptide reads, in one-letter code: tRNA-specific 2-thiouridylase MnmA (370 aa).

Residues 9–16 (GMSGGVDS) and Met-35 contribute to the ATP site. Positions 95 to 97 (NPD) are interaction with target base in tRNA. Cys-100 (nucleophile) is an active-site residue. A disulfide bond links Cys-100 and Cys-196. Residue Gly-124 coordinates ATP. Residues 146 to 148 (KDQ) are interaction with tRNA. Cys-196 serves as the catalytic Cysteine persulfide intermediate. Residues 308–309 (RY) are interaction with tRNA.

This sequence belongs to the MnmA/TRMU family.

Its subcellular location is the cytoplasm. It carries out the reaction S-sulfanyl-L-cysteinyl-[protein] + uridine(34) in tRNA + AH2 + ATP = 2-thiouridine(34) in tRNA + L-cysteinyl-[protein] + A + AMP + diphosphate + H(+). In terms of biological role, catalyzes the 2-thiolation of uridine at the wobble position (U34) of tRNA, leading to the formation of s(2)U34. The chain is tRNA-specific 2-thiouridylase MnmA from Ralstonia nicotianae (strain ATCC BAA-1114 / GMI1000) (Ralstonia solanacearum).